The following is a 186-amino-acid chain: Protein C (186 aa).

The span at 1–15 shows a compositional bias: polar residues; that stretch reads MSKTDWNASGLSRPS. Positions 1-45 are disordered; it reads MSKTDWNASGLSRPSPSAHWPSRKPWQHGQKYQTTQDRTEPPARK.

Belongs to the morbillivirus protein C family. As to quaternary structure, interacts with the phosphoprotein (via C-terminus); this interaction allows C to associate with the ribonucleocapsid.

It is found in the host nucleus. Its subcellular location is the host cytoplasmic vesicle. Ribonucleocapsid-associated protein that interacts with the phosphoprotein (P), thereby increasing replication accuracy and processivity of the polymerase complex. This Homo sapiens (Human) protein is Protein C (P/V/C).